The chain runs to 345 residues: MGYEPDPDALRWGLHDLEVCTLTNAGSCSSVTRYESGGGGTQGYVREGYNQPVTGYVDNDAVIAQFYQDELSRVARAEASGINSLSPTSVVAQDWPHPHQGQENQGEAIDITQESDILHNHNGNMEDKNVARIRFEGGQSSPSRDDDSVCSVEIEEESWSEVGKRLNQMIPIAHVPKINGELPSEDEQISDHERLFQRLQLYGLVENKIEGDGNCQFRSLSDQLYRSPEHHNFVREQVVNQLAYNREIYEGYVPMAYNDYLKAMKRNGEWGDHVTLQAAADLFGVRMFVITSFKDTCYIEILPHFQKSNRLICLSFWAEVHYNSIYPEGELPIPEGKKKKKYWVF.

In terms of domain architecture, OTU spans 204 to 328 (LVENKIEGDG…EVHYNSIYPE (125 aa)). Aspartate 212 is a catalytic residue. Cysteine 215 acts as the Nucleophile in catalysis. The active site involves histidine 321.

Belongs to the peptidase C85 family.

It catalyses the reaction Thiol-dependent hydrolysis of ester, thioester, amide, peptide and isopeptide bonds formed by the C-terminal Gly of ubiquitin (a 76-residue protein attached to proteins as an intracellular targeting signal).. Hydrolase that can remove conjugated ubiquitin from proteins in vitro and may therefore play an important regulatory role at the level of protein turnover by preventing degradation. Cysteine protease with a preference for 'Lys-63' and 'Lys-48' -linked ubiquitin (UB) tetramers as substrates. Also cleaves RUB-GST fusion. The polypeptide is OVARIAN TUMOR DOMAIN-containing deubiquitinating enzyme 9 (Arabidopsis thaliana (Mouse-ear cress)).